A 301-amino-acid chain; its full sequence is Glycine--tRNA ligase alpha subunit (301 aa).

It belongs to the class-II aminoacyl-tRNA synthetase family. In terms of assembly, tetramer of two alpha and two beta subunits.

Its subcellular location is the cytoplasm. The catalysed reaction is tRNA(Gly) + glycine + ATP = glycyl-tRNA(Gly) + AMP + diphosphate. The protein is Glycine--tRNA ligase alpha subunit of Bordetella avium (strain 197N).